Reading from the N-terminus, the 137-residue chain is Small ribosomal subunit protein eS17 (137 aa).

Belongs to the eukaryotic ribosomal protein eS17 family. In terms of assembly, component of the small ribosomal subunit. Mature ribosomes consist of a small (40S) and a large (60S) subunit. The 40S subunit contains about 32 different proteins and 1 molecule of RNA (18S). The 60S subunit contains 45 different proteins and 3 molecules of RNA (25S, 5.8S and 5S).

The protein resides in the cytoplasm. In terms of biological role, component of the ribosome, a large ribonucleoprotein complex responsible for the synthesis of proteins in the cell. The small ribosomal subunit (SSU) binds messenger RNAs (mRNAs) and translates the encoded message by selecting cognate aminoacyl-transfer RNA (tRNA) molecules. The large subunit (LSU) contains the ribosomal catalytic site termed the peptidyl transferase center (PTC), which catalyzes the formation of peptide bonds, thereby polymerizing the amino acids delivered by tRNAs into a polypeptide chain. The nascent polypeptides leave the ribosome through a tunnel in the LSU and interact with protein factors that function in enzymatic processing, targeting, and the membrane insertion of nascent chains at the exit of the ribosomal tunnel. This is Small ribosomal subunit protein eS17 (RPS17B) from Candida albicans (strain SC5314 / ATCC MYA-2876) (Yeast).